The following is a 138-amino-acid chain: ATP synthase epsilon chain (138 aa).

Belongs to the ATPase epsilon chain family. In terms of assembly, F-type ATPases have 2 components, CF(1) - the catalytic core - and CF(0) - the membrane proton channel. CF(1) has five subunits: alpha(3), beta(3), gamma(1), delta(1), epsilon(1). CF(0) has three main subunits: a, b and c.

The protein resides in the cell membrane. In terms of biological role, produces ATP from ADP in the presence of a proton gradient across the membrane. The protein is ATP synthase epsilon chain of Streptococcus pyogenes serotype M3 (strain ATCC BAA-595 / MGAS315).